The sequence spans 179 residues: Large ribosomal subunit protein uL5 (179 aa).

It belongs to the universal ribosomal protein uL5 family. Part of the 50S ribosomal subunit; part of the 5S rRNA/L5/L18/L25 subcomplex. Contacts the 5S rRNA and the P site tRNA. Forms a bridge to the 30S subunit in the 70S ribosome.

In terms of biological role, this is one of the proteins that bind and probably mediate the attachment of the 5S RNA into the large ribosomal subunit, where it forms part of the central protuberance. In the 70S ribosome it contacts protein S13 of the 30S subunit (bridge B1b), connecting the 2 subunits; this bridge is implicated in subunit movement. Contacts the P site tRNA; the 5S rRNA and some of its associated proteins might help stabilize positioning of ribosome-bound tRNAs. The sequence is that of Large ribosomal subunit protein uL5 from Bacillus licheniformis (strain ATCC 14580 / DSM 13 / JCM 2505 / CCUG 7422 / NBRC 12200 / NCIMB 9375 / NCTC 10341 / NRRL NRS-1264 / Gibson 46).